The primary structure comprises 1158 residues: ATP-dependent helicase/deoxyribonuclease subunit B (1158 aa).

Residues 1 to 275 (MTLHAYLGRA…QYFNQLYRFN (275 aa)) form the UvrD-like helicase ATP-binding domain. Residue 8–15 (GRAGTGKS) participates in ATP binding. The region spanning 269–583 (NQLYRFNNQD…SIGTMDLAKV (315 aa)) is the UvrD-like helicase C-terminal domain. [4Fe-4S] cluster-binding residues include cysteine 784, cysteine 1112, cysteine 1115, and cysteine 1121.

Belongs to the helicase family. AddB/RexB type 1 subfamily. In terms of assembly, heterodimer of AddA and AddB. Mg(2+) serves as cofactor. The cofactor is [4Fe-4S] cluster.

Its function is as follows. The heterodimer acts as both an ATP-dependent DNA helicase and an ATP-dependent, dual-direction single-stranded exonuclease. Recognizes the chi site generating a DNA molecule suitable for the initiation of homologous recombination. The AddB subunit has 5' -&gt; 3' nuclease activity but not helicase activity. The sequence is that of ATP-dependent helicase/deoxyribonuclease subunit B from Staphylococcus aureus (strain COL).